The primary structure comprises 457 residues: Chromosomal replication initiator protein DnaA (457 aa).

The interval 1-77 is domain I, interacts with DnaA modulators; that stretch reads MDTNNNIEKE…EILSQNKVGM (77 aa). The segment at 77 to 108 is domain II; sequence MHLAHSVDVRIEVAPKIQVNAQSNINYKATKT. Residues 109 to 323 form a domain III, AAA+ region region; sequence SVKDSYTFEN…GAIIKISVNA (215 aa). Residues G153, G155, K156, and T157 each coordinate ATP. The interval 324–457 is domain IV, binds dsDNA; that stretch reads NLMNATIDLN…DKKTAFNSSE (134 aa).

This sequence belongs to the DnaA family. Oligomerizes as a right-handed, spiral filament on DNA at oriC.

It is found in the cytoplasm. Plays an essential role in the initiation and regulation of chromosomal replication. ATP-DnaA binds to the origin of replication (oriC) to initiate formation of the DNA replication initiation complex once per cell cycle. Binds the DnaA box (a 9 base pair repeat at the origin) and separates the double-stranded (ds)DNA. Forms a right-handed helical filament on oriC DNA; dsDNA binds to the exterior of the filament while single-stranded (ss)DNA is stabiized in the filament's interior. The ATP-DnaA-oriC complex binds and stabilizes one strand of the AT-rich DNA unwinding element (DUE), permitting loading of DNA polymerase. After initiation quickly degrades to an ADP-DnaA complex that is not apt for DNA replication. Binds acidic phospholipids. In Helicobacter pylori (strain J99 / ATCC 700824) (Campylobacter pylori J99), this protein is Chromosomal replication initiator protein DnaA.